Here is a 157-residue protein sequence, read N- to C-terminus: Molybdopterin synthase catalytic subunit (157 aa).

Substrate is bound by residues 103–104 (HR), Lys119, and 126–128 (KKE).

This sequence belongs to the MoaE family. MOCS2B subfamily. Heterotetramer; composed of 2 small (MOCS2A) and 2 large (MOCS2B) subunits.

It is found in the cytoplasm. It carries out the reaction 2 [molybdopterin-synthase sulfur-carrier protein]-C-terminal-Gly-aminoethanethioate + cyclic pyranopterin phosphate + H2O = molybdopterin + 2 [molybdopterin-synthase sulfur-carrier protein]-C-terminal Gly-Gly + 2 H(+). It functions in the pathway cofactor biosynthesis; molybdopterin biosynthesis. Functionally, catalytic subunit of the molybdopterin synthase complex, a complex that catalyzes the conversion of precursor Z into molybdopterin. Acts by mediating the incorporation of 2 sulfur atoms from thiocarboxylated MOCS2A into precursor Z to generate a dithiolene group. The protein is Molybdopterin synthase catalytic subunit of Culex quinquefasciatus (Southern house mosquito).